The primary structure comprises 212 residues: Thymidylate kinase (212 aa).

10–17 is an ATP binding site; that stretch reads GLEGAGKT.

This sequence belongs to the thymidylate kinase family.

The enzyme catalyses dTMP + ATP = dTDP + ADP. Its function is as follows. Phosphorylation of dTMP to form dTDP in both de novo and salvage pathways of dTTP synthesis. This Baumannia cicadellinicola subsp. Homalodisca coagulata protein is Thymidylate kinase.